The chain runs to 297 residues: Homoserine kinase (297 aa).

Residue 82 to 92 (PLTRGLGSSAS) coordinates ATP.

This sequence belongs to the GHMP kinase family. Homoserine kinase subfamily.

Its subcellular location is the cytoplasm. It carries out the reaction L-homoserine + ATP = O-phospho-L-homoserine + ADP + H(+). Its pathway is amino-acid biosynthesis; L-threonine biosynthesis; L-threonine from L-aspartate: step 4/5. Catalyzes the ATP-dependent phosphorylation of L-homoserine to L-homoserine phosphate. This Bacillus anthracis (strain CDC 684 / NRRL 3495) protein is Homoserine kinase.